A 121-amino-acid chain; its full sequence is Large ribosomal subunit protein bL12 (121 aa).

This sequence belongs to the bacterial ribosomal protein bL12 family. As to quaternary structure, homodimer. Part of the ribosomal stalk of the 50S ribosomal subunit. Forms a multimeric L10(L12)X complex, where L10 forms an elongated spine to which 2 to 4 L12 dimers bind in a sequential fashion. Binds GTP-bound translation factors.

Forms part of the ribosomal stalk which helps the ribosome interact with GTP-bound translation factors. Is thus essential for accurate translation. The polypeptide is Large ribosomal subunit protein bL12 (Mesomycoplasma hyopneumoniae (strain 7448) (Mycoplasma hyopneumoniae)).